Here is a 473-residue protein sequence, read N- to C-terminus: H(+)/Cl(-) exchange transporter ClcA (473 aa).

The Cytoplasmic portion of the chain corresponds to 1–32; sequence MKTDTPSLETPQAARLRRRQLIRQLLERDKTP. The helical transmembrane segment at 33 to 69 threads the bilayer; the sequence is LAILFMAAVVGTLVGLAAVAFDKGVAWLQNQRMGALV. Over 70 to 76 the chain is Periplasmic; it reads HTADNYP. Residues 77-100 traverse the membrane as a helical segment; sequence LLLTVAFLCSAVLAMFGYFLVRKY. The short motif at 106–110 is the Selectivity filter part_1 element; that stretch reads GSGIP. Residue S107 participates in chloride binding. Positions 109–116 form an intramembrane region, helical; that stretch reads IPEIEGAL. The Cytoplasmic segment spans residues 117–123; the sequence is EDQRPVR. A run of 2 helical transmembrane segments spans residues 124-141 and 148-166; these read WWRVLPVKFFGGLGTLGG and EGPTVQIGGNIGRMVLDIF. The Selectivity filter part_2 motif lies at 146–150; the sequence is GREGP. The Cytoplasmic portion of the chain corresponds to 167 to 176; sequence RLKGDEARHT. 2 intramembrane regions (helical) span residues 177 to 189 and 193 to 201; these read LLATGAAAGLAAA and PLAGILFII. Over 202–214 the chain is Cytoplasmic; sequence EEMRPQFRYTLIS. A helical transmembrane segment spans residues 215–232; sequence IKAVFIGVIMSTIMYRIF. Over 233-252 the chain is Periplasmic; the sequence is NHEVALIDVGKLSDAPLNTL. Residues 253–281 form a helical membrane-spanning segment; it reads WLYLILGIIFGIFGPIFNKWVLGMQDLLH. At 282–287 the chain is on the cytoplasmic side; the sequence is RVHGGN. A helical transmembrane segment spans residues 288–309; sequence ITKWILMGGAIGGLCGLLGFVA. The Periplasmic segment spans residues 310 to 329; the sequence is PATSGGGFNLIPIATAGNFS. 2 helical membrane passes run 330–349 and 355–376; these read MGMLVFIFVARVITTLLCFS and GIFAPMLALGTVLGTAFGMVAV. A Selectivity filter part_3 motif is present at residues 355-359; it reads GIFAP. The chloride site is built by I356 and F357. Residues 377–386 are Periplasmic-facing; it reads ELFPQYHLEA. The helical intramembrane region spans 387 to 401; the sequence is GTFAIAGMGALLAAS. An intramembrane region (note=Loop between two helices) is located at residues 402 to 404; sequence IRA. The helical intramembrane region spans 405-416; that stretch reads PLTGIILVLEMT. An intramembrane region (note=Loop between two helices) is located at residues 417-421; sequence DNYQL. A helical transmembrane segment spans residues 422–438; sequence ILPMIITGLGATLLAQF. Topologically, residues 439-473 are cytoplasmic; the sequence is TGGKPLYSAILARTLAKQEAEQLARSKAASASENT. Y445 is a binding site for chloride.

It belongs to the chloride channel (TC 2.A.49) family. ClcA subfamily. In terms of assembly, homodimer.

Its subcellular location is the cell inner membrane. The enzyme catalyses 2 chloride(in) + H(+)(out) = 2 chloride(out) + H(+)(in). In terms of biological role, proton-coupled chloride transporter. Functions as antiport system and exchanges two chloride ions for 1 proton. Probably acts as an electrical shunt for an outwardly-directed proton pump that is linked to amino acid decarboxylation, as part of the extreme acid resistance (XAR) response. The protein is H(+)/Cl(-) exchange transporter ClcA of Escherichia coli O9:H4 (strain HS).